A 100-amino-acid polypeptide reads, in one-letter code: UPF0213 protein YhbQ (100 aa).

One can recognise a GIY-YIG domain in the interval 2 to 77 (TPWFLYLIRT…KQLTKRQKER (76 aa)).

This sequence belongs to the UPF0213 family.

The protein is UPF0213 protein YhbQ of Escherichia coli (strain K12 / MC4100 / BW2952).